The following is a 337-amino-acid chain: Probable deoxyhypusine synthase (337 aa).

The active-site Nucleophile is Lys308.

The protein belongs to the deoxyhypusine synthase family. Requires NAD(+) as cofactor.

It catalyses the reaction [eIF5A protein]-L-lysine + spermidine = [eIF5A protein]-deoxyhypusine + propane-1,3-diamine. It participates in protein modification; eIF5A hypusination. Catalyzes the NAD-dependent oxidative cleavage of spermidine and the subsequent transfer of the butylamine moiety of spermidine to the epsilon-amino group of a specific lysine residue of the eIF-5A precursor protein to form the intermediate deoxyhypusine residue. The sequence is that of Probable deoxyhypusine synthase from Thermococcus kodakarensis (strain ATCC BAA-918 / JCM 12380 / KOD1) (Pyrococcus kodakaraensis (strain KOD1)).